A 169-amino-acid chain; its full sequence is Disulfide bond formation protein B (169 aa).

Residues 1–13 are Cytoplasmic-facing; that stretch reads MSQLQQFCHNRFS. Residues 14 to 30 traverse the membrane as a helical segment; sequence WGLLLLSAIGLELAALF. The Periplasmic portion of the chain corresponds to 31-48; sequence FQYGMDLAPCVMCIYIRV. The cysteines at positions 40 and 43 are disulfide-linked. Residues 49–64 form a helical membrane-spanning segment; sequence AVLGIILAALIGILQP. Over 65-71 the chain is Cytoplasmic; it reads KVWLLRL. A helical membrane pass occupies residues 72–89; it reads VGMAGWAVSAVWGFKLAY. The Periplasmic segment spans residues 90 to 144; that stretch reads ELNQMQVNPSPFATCSFYPEFPSFMPLDTWLPSVFSPTGMCSDSPWSWLSVSMAQ. Cysteine 104 and cysteine 130 form a disulfide bridge. A helical transmembrane segment spans residues 145–163; sequence WMMLGFAIYGVIWLLMLLP. At 164–169 the chain is on the cytoplasmic side; the sequence is ALKSAK.

It belongs to the DsbB family.

It is found in the cell inner membrane. Functionally, required for disulfide bond formation in some periplasmic proteins. Acts by oxidizing the DsbA protein. The chain is Disulfide bond formation protein B from Shewanella frigidimarina (strain NCIMB 400).